Reading from the N-terminus, the 253-residue chain is Vacuolar v-SNARE NYV1 (253 aa).

Over 1-231 (MKRFNVSYVE…EIMWWQKVKN (231 aa)) the chain is Cytoplasmic. Residues 147–166 (LNSSGNGQSSNGNGQNTISD) are disordered. Residues 148-162 (NSSGNGQSSNGNGQN) are compositionally biased toward low complexity. Positions 167–227 (IGDATEDQIK…VNIKEIMWWQ (61 aa)) constitute a v-SNARE coiled-coil homology domain. The helical; Anchor for type IV membrane protein transmembrane segment at 232–252 (ITLLTFTIILFVSAAFMFFYL) threads the bilayer. Position 253 (W253) is a topological domain, vacuolar.

This sequence belongs to the synaptobrevin family. In terms of assembly, present in a pentameric cis-SNARE complex composed of the v-SNAREs NYV1, VTI1 and YKT6, and the t-SNAREs VAM3 and VAM7 on vacuolar membranes. Interacts in trans with the cognate t-SNARE VAM3 during the docking step of homotypic vacuolar fusion. Interacts with the vacuolar transporter chaperone (VTC) complex and the vacuolar Ca(2+)-ATPase PMC1.

The protein localises to the vacuole membrane. Vacuolar v-SNARE required for docking. Only involved in homotypic vacuole fusion. Required for Ca(2+) efflux from the vacuolar lumen, a required signal for subsequent membrane fusion events, by inhibiting vacuolar Ca(2+)-ATPase PMC1 and promoting Ca(2+) release when forming trans-SNARE assemblies during the docking step. The polypeptide is Vacuolar v-SNARE NYV1 (NYV1) (Saccharomyces cerevisiae (strain ATCC 204508 / S288c) (Baker's yeast)).